The following is a 509-amino-acid chain: ATP synthase subunit alpha, mitochondrial (509 aa).

171 to 178 (GDRQTGKT) is an ATP binding site.

The protein belongs to the ATPase alpha/beta chains family. In terms of assembly, F-type ATPases have 2 components, CF(1) - the catalytic core - and CF(0) - the membrane proton channel. CF(1) has five subunits: alpha(3), beta(3), gamma(1), delta(1), epsilon(1). CF(0) has three main subunits: a, b and c.

It localises to the mitochondrion. The protein resides in the mitochondrion inner membrane. Mitochondrial membrane ATP synthase (F(1)F(0) ATP synthase or Complex V) produces ATP from ADP in the presence of a proton gradient across the membrane which is generated by electron transport complexes of the respiratory chain. F-type ATPases consist of two structural domains, F(1) - containing the extramembraneous catalytic core, and F(0) - containing the membrane proton channel, linked together by a central stalk and a peripheral stalk. During catalysis, ATP synthesis in the catalytic domain of F(1) is coupled via a rotary mechanism of the central stalk subunits to proton translocation. Subunits alpha and beta form the catalytic core in F(1). Rotation of the central stalk against the surrounding alpha(3)beta(3) subunits leads to hydrolysis of ATP in three separate catalytic sites on the beta subunits. Subunit alpha does not bear the catalytic high-affinity ATP-binding sites. The protein is ATP synthase subunit alpha, mitochondrial (ATPA) of Oryza sativa subsp. indica (Rice).